A 1466-amino-acid chain; its full sequence is Adhesion G protein-coupled receptor L1 (1466 aa).

The signal sequence occupies residues 1-28; the sequence is MARLAAALWSLCVTTVLVTSATQGLSRA. At 29–852 the chain is on the extracellular side; sequence GLPFGLMRRE…EIYQGRINEL (824 aa). The SUEL-type lectin domain occupies 40–129; the sequence is ACEGYPIELR…KYLEVQYDCV (90 aa). 5 cysteine pairs are disulfide-bonded: C41–C71, C50–C128, C83–C115, C96–C102, and C135–C317. E42 provides a ligand contact to alpha-L-rhamnose. N98 carries N-linked (GlcNAc...) asparagine glycosylation. 117-120 contributes to the alpha-L-rhamnose binding site; it reads GTYK. Positions 134–393 constitute an Olfactomedin-like domain; that stretch reads VCPGTLQKVL…VVRYSLEFGP (260 aa). A disordered region spans residues 395–463; the sequence is DPSAGPATSP…APAPSTRRPP (69 aa). Low complexity predominate over residues 400–436; the sequence is PATSPPLSTTTTARPTPLTSTASPAATTPLRRAPLTT. Over residues 448–463 the composition is skewed to pro residues; it reads DLPPATAPAPSTRRPP. 2 disulfides stabilise this stretch: C475–C510 and C498–C527. Residues N526, N635, N736, N795, N800, and N821 are each glycosylated (N-linked (GlcNAc...) asparagine). The GAIN-B domain maps to 664-845; the sequence is PARFLAAKQN…AVLMAHREIY (182 aa). Intrachain disulfides connect C796-C827 and C815-C829. A GPS region spans residues 796–845; that stretch reads CSFWNYSERSMLGYWSTQGCRLVESNKTHTTCACSHLTNFAVLMAHREIY. A helical transmembrane segment spans residues 853-873; that stretch reads LLSVITWVGIVISLVCLAICI. At 874 to 887 the chain is on the cytoplasmic side; it reads STFCFLRGLQTDRN. Residues 888 to 908 form a helical membrane-spanning segment; that stretch reads TIHKNLCINLFLAELLFLVGI. Residues 909–914 are Extracellular-facing; the sequence is DKTQYE. Residues 915-935 traverse the membrane as a helical segment; sequence VACPIFAGLLHYFFLAAFSWL. Residues 936–958 lie on the Cytoplasmic side of the membrane; the sequence is CLEGVHLYLLLVEVFESEYSRTK. Residues 959 to 979 traverse the membrane as a helical segment; it reads YYYLGGYCFPALVVGIAAAID. The Extracellular portion of the chain corresponds to 980-996; that stretch reads YRSYGTEKACWLRVDNY. The chain crosses the membrane as a helical span at residues 997 to 1017; it reads FIWSFIGPVSFVIVVNLVFLM. Residues 1018–1044 are Cytoplasmic-facing; it reads VTLHKMIRSSSVLKPDSSRLDNIKSWA. The chain crosses the membrane as a helical span at residues 1045–1065; it reads LGAIALLFLLGLTWAFGLLFI. The Extracellular segment spans residues 1066–1069; it reads NKES. Residues 1070-1090 traverse the membrane as a helical segment; that stretch reads VVMAYLFTTFNAFQGVFIFVF. At 1091 to 1466 the chain is on the cytoplasmic side; that stretch reads HCALQKKVHK…DGQMQLVTSL (376 aa). R1188 is subject to Omega-N-methylarginine. A Phosphoserine modification is found at S1214. Disordered regions lie at residues 1242-1267, 1288-1319, 1352-1421, and 1443-1466; these read FNNSYSLRSGDFPPGDGGPEPPRGRN, RGASGGAKGPPPEPPVPPVPGVSEDEAGGPGS, ESES…SRPP, and YLAAPSLEGPGPDGDGQMQLVTSL. The segment covering 1296–1307 has biased composition (pro residues); that stretch reads GPPPEPPVPPVP. S1319 carries the phosphoserine modification. Residues 1400–1412 are compositionally biased toward pro residues; it reads ALPPPPPAPPGPP. A phosphoserine mark is found at S1448 and S1465.

This sequence belongs to the G-protein coupled receptor 2 family. Adhesion G-protein coupled receptor (ADGR) subfamily. Forms a heterodimer, consisting of a large extracellular region (p120) non-covalently linked to a seven-transmembrane moiety (p85). Interacts with syntaxin and with proteins of the SHANK family via the PDZ domain. Interacts (via extracellular domain) with FLRT1, FLRT2 and FLRT3 (via extracellular domain). Autoproteolytically cleaved into 2 subunits, an extracellular subunit and a seven-transmembrane subunit. This proteolytic processing takes place early in the biosynthetic pathway, either in the endoplasmic reticulum or in the early compartment of the Golgi apparatus.

The protein resides in the cell membrane. It is found in the cell projection. Its subcellular location is the axon. The protein localises to the growth cone. It localises to the synapse. The protein resides in the presynaptic cell membrane. It is found in the synaptosome. Its function is as follows. Calcium-independent receptor of high affinity for alpha-latrotoxin, an excitatory neurotoxin present in black widow spider venom which triggers massive exocytosis from neurons and neuroendocrine cells. Receptor for TENM2 that mediates heterophilic synaptic cell-cell contact and postsynaptic specialization. Receptor probably implicated in the regulation of exocytosis. The polypeptide is Adhesion G protein-coupled receptor L1 (Mus musculus (Mouse)).